The following is a 1368-amino-acid chain: DNA-directed RNA polymerase subunit beta (1368 aa).

This sequence belongs to the RNA polymerase beta chain family. In terms of assembly, the RNAP catalytic core consists of 2 alpha, 1 beta, 1 beta' and 1 omega subunit. When a sigma factor is associated with the core the holoenzyme is formed, which can initiate transcription.

The enzyme catalyses RNA(n) + a ribonucleoside 5'-triphosphate = RNA(n+1) + diphosphate. Its function is as follows. DNA-dependent RNA polymerase catalyzes the transcription of DNA into RNA using the four ribonucleoside triphosphates as substrates. This chain is DNA-directed RNA polymerase subunit beta, found in Cupriavidus necator (strain ATCC 17699 / DSM 428 / KCTC 22496 / NCIMB 10442 / H16 / Stanier 337) (Ralstonia eutropha).